We begin with the raw amino-acid sequence, 104 residues long: U20-lycotoxin-Ls1a (104 aa).

The signal sequence occupies residues 1-30 (MFSTSDQVSKMNSRILSALLILGIATCVIA). Residues 31 to 76 (GGFCPKSRHPQCNLSYKINDCCAQSDCRVGSVCCVEGCGNVCRAES) enclose the WAP domain. 5 disulfide bridges follow: Cys34–Cys64, Cys42–Cys68, Cys51–Cys63, Cys52–Cys90, and Cys57–Cys72.

It belongs to the venom protein 11 family. 02 (wap-2) subfamily. Contains 5 disulfide bonds. As to expression, expressed by the venom gland.

The protein resides in the secreted. In terms of biological role, has antibacterial activity. The protein is U20-lycotoxin-Ls1a of Lycosa singoriensis (Wolf spider).